An 833-amino-acid chain; its full sequence is Leucine--tRNA ligase (833 aa).

Positions 41 to 52 match the 'HIGH' region motif; sequence PYPSGAGLHVGH. The short motif at 610 to 614 is the 'KMSKS' region element; it reads KMSKS. Residue Lys613 participates in ATP binding.

The protein belongs to the class-I aminoacyl-tRNA synthetase family.

The protein localises to the cytoplasm. The catalysed reaction is tRNA(Leu) + L-leucine + ATP = L-leucyl-tRNA(Leu) + AMP + diphosphate. This Streptococcus agalactiae serotype III (strain NEM316) protein is Leucine--tRNA ligase.